The chain runs to 496 residues: Probable CtpA-like serine protease (496 aa).

Basic and acidic residues predominate over residues 1-16; sequence MDDKQHTSSSDDERAE. Residues 1-27 form a disordered region; sequence MDDKQHTSSSDDERAEIATSNQDQETN. Positions 18 to 27 are enriched in polar residues; the sequence is ATSNQDQETN. A helical transmembrane segment spans residues 39–59; the sequence is FISILIGTILITAVITVVAYI. Positions 124–206 constitute a PDZ domain; the sequence is TKSFNEGVSG…TEVTLTVQRG (83 aa). Active-site charge relay system residues include Ser329, Asp340, and Lys354.

Belongs to the peptidase S41A family.

The protein localises to the cell membrane. This Staphylococcus aureus (strain COL) protein is Probable CtpA-like serine protease.